Here is a 1015-residue protein sequence, read N- to C-terminus: Beta-galactosidase (1015 aa).

Glutamate 434 serves as the catalytic Proton donor. The active-site Nucleophile is glutamate 513.

This sequence belongs to the glycosyl hydrolase 2 family. Requires Mg(2+) as cofactor. It depends on Mn(2+) as a cofactor.

The catalysed reaction is Hydrolysis of terminal non-reducing beta-D-galactose residues in beta-D-galactosides.. The protein is Beta-galactosidase (lacZ) of Arthrobacter sp. (strain B7).